The sequence spans 148 residues: Large ribosomal subunit protein uL15 (148 aa).

The span at 1-30 (MPSRLRKTRKLRGHVSHGHGRIGKHRKHPG) shows a compositional bias: basic residues. Residues 1–39 (MPSRLRKTRKLRGHVSHGHGRIGKHRKHPGGRGNAGGLH) are disordered. His39 is modified ((3S)-3-hydroxyhistidine). N6-acetyllysine occurs at positions 47 and 55. Ser68 carries the phosphoserine modification. The residue at position 110 (Lys110) is an N6-acetyllysine.

It belongs to the universal ribosomal protein uL15 family. As to quaternary structure, component of the large ribosomal subunit. Hydroxylated on His-39 by MINA.

The protein localises to the cytoplasm. In terms of biological role, component of the large ribosomal subunit. The ribosome is a large ribonucleoprotein complex responsible for the synthesis of proteins in the cell. This Macaca fascicularis (Crab-eating macaque) protein is Large ribosomal subunit protein uL15 (RPL27A).